The sequence spans 185 residues: Transcription factor FapR (185 aa).

The protein belongs to the FapR family.

Its function is as follows. Transcriptional factor involved in regulation of membrane lipid biosynthesis by repressing genes involved in fatty acid and phospholipid metabolism. The chain is Transcription factor FapR from Staphylococcus aureus (strain Mu3 / ATCC 700698).